The following is a 416-amino-acid chain: Phosphatidylinositol 5-phosphate 4-kinase type-2 beta (416 aa).

Residue S2 is modified to N-acetylserine. T8 carries the post-translational modification Phosphothreonine. S19 is modified (phosphoserine). The PIPK domain occupies 38–415; that stretch reads ASEPILSVLM…RFNEFMSNIL (378 aa). The tract at residues 64–70 is required for interaction with PIP5K1A; sequence VMLMPDD. An N6-acetyllysine mark is found at K94 and K150. ATP is bound by residues 202–204 and K214; that span reads RNV. GTP-binding positions include 203–204 and K214; that span reads NV. T322 is modified (phosphothreonine). S326 carries the post-translational modification Phosphoserine. Residue D369 participates in GTP binding.

As to quaternary structure, homodimer. Binds TNFRSF1A. Interacts with PIP4K2A; the interaction suppresses ubiquitination by the SPOP/CUL3 complex. Probably interacts with PIP5K1A; the interaction inhibits PIP5K1A kinase activity. Ubiquitinated by the SPOP/CUL3 complex. Ubiquitination is stimulated by PtdIns5P levels. Post-translationally, phosphorylated on serine residues.

The protein localises to the endoplasmic reticulum membrane. Its subcellular location is the cell membrane. It localises to the nucleus. It is found in the cytoplasm. The catalysed reaction is a 1,2-diacyl-sn-glycero-3-phospho-(1D-myo-inositol-5-phosphate) + ATP = a 1,2-diacyl-sn-glycero-3-phospho-(1D-myo-inositol-4,5-bisphosphate) + ADP + H(+). It catalyses the reaction 1,2-dihexadecanoyl-sn-glycero-3-phospho-(1D-myo-inositol-5-phosphate) + ATP = 1,2-dihexadecanoyl-sn-glycero-3-phospho-(1D-myo-inositol-4,5-bisphosphate) + ADP + H(+). It carries out the reaction 1,2-dihexadecanoyl-sn-glycero-3-phospho-(1D-myo-inositol-5-phosphate) + GTP = 1,2-dihexadecanoyl-sn-glycero-3-phospho-(1D-myo-inositol-4,5-bisphosphate) + GDP + H(+). Its function is as follows. Participates in the biosynthesis of phosphatidylinositol 4,5-bisphosphate. Preferentially utilizes GTP, rather than ATP, for PI(5)P phosphorylation and its activity reflects changes in direct proportion to the physiological GTP concentration. Its GTP-sensing activity is critical for metabolic adaptation. In collaboration with PIP4K2A, has a role in mediating autophagy in times of nutrient stress. Required for autophagosome-lysosome fusion and the regulation of cellular lipid metabolism. PIP4Ks negatively regulate insulin signaling through a catalytic-independent mechanism. They interact with PIP5Ks and suppress PIP5K-mediated PtdIns(4,5)P2 synthesis and insulin-dependent conversion to PtdIns(3,4,5)P3. The chain is Phosphatidylinositol 5-phosphate 4-kinase type-2 beta from Mus musculus (Mouse).